The primary structure comprises 450 residues: LanC-like protein 2 (450 aa).

A lipid anchor (N-myristoyl glycine) is attached at glycine 2. The segment at 2 to 15 is interaction with inositol phospholipids; the sequence is GETMSKRLKLHLGG. Residue tyrosine 198 is modified to Phosphotyrosine.

This sequence belongs to the LanC-like protein family. As to quaternary structure, interacts with an array of inositol phospholipids such as phosphatidylinositol 3-phosphate (PI3P), phosphatidylinositol 4-phosphate (PI4P) and phosphatidylinositol 5-phosphate (PI5P). PIP-binding enhances membrane association. Myristoylated. Essential for membrane association. Expressed in brain and testis.

The protein resides in the nucleus. The protein localises to the cytoplasm. It localises to the cell membrane. Functionally, necessary for abscisic acid (ABA) binding on the cell membrane and activation of the ABA signaling pathway in granulocytes. The chain is LanC-like protein 2 (LANCL2) from Homo sapiens (Human).